The sequence spans 256 residues: 14-3-3-like protein GF14-C (256 aa).

Belongs to the 14-3-3 family. As to quaternary structure, may form a complex with the transcriptional activator VP1 and the bZIP transcription factor EMBP1. As to expression, expressed in seedlings, internodes and panicles.

It localises to the cytoplasm. Its subcellular location is the nucleus. In terms of biological role, is associated with a DNA binding complex that binds to the G box, a well-characterized cis-acting DNA regulatory element found in plant genes. The chain is 14-3-3-like protein GF14-C (GF14C) from Oryza sativa subsp. japonica (Rice).